The primary structure comprises 681 residues: DNA ligase (681 aa).

NAD(+) contacts are provided by residues 34–38 (DAEYD), 83–84 (SL), and Glu-115. Catalysis depends on Lys-117, which acts as the N6-AMP-lysine intermediate. NAD(+)-binding residues include Arg-138, Glu-185, Lys-301, and Lys-325. Positions 419, 422, 437, and 443 each coordinate Zn(2+). The BRCT domain occupies 602 to 681 (RKSDVLAGQT…AALLALIGER (80 aa)).

It belongs to the NAD-dependent DNA ligase family. LigA subfamily. Mg(2+) is required as a cofactor. The cofactor is Mn(2+).

It carries out the reaction NAD(+) + (deoxyribonucleotide)n-3'-hydroxyl + 5'-phospho-(deoxyribonucleotide)m = (deoxyribonucleotide)n+m + AMP + beta-nicotinamide D-nucleotide.. Its function is as follows. DNA ligase that catalyzes the formation of phosphodiester linkages between 5'-phosphoryl and 3'-hydroxyl groups in double-stranded DNA using NAD as a coenzyme and as the energy source for the reaction. It is essential for DNA replication and repair of damaged DNA. The sequence is that of DNA ligase from Chloroflexus aggregans (strain MD-66 / DSM 9485).